The primary structure comprises 1565 residues: Major cell-surface adhesin PAc (1565 aa).

Residues 1–38 (MKVKKTYGFRKSKISKTLCGAVLGTVAAVSVAGQKVFA) form the signal peptide. The segment covering 42–54 (TTTSDVDTKVVGT) has biased composition (low complexity). Positions 42–81 (TTTSDVDTKVVGTQTGNPATNLPEAQGSASKEAEQSQTKL) are disordered. The span at 72–81 (KEAEQSQTKL) shows a compositional bias: basic and acidic residues. Ag I/II A repeat units follow at residues 146–220 (KKTT…QKTN), 221–302 (AANQ…QEAN), 303–384 (AANE…KKAN), and 385–466 (AANE…QKDL). The heptad repeats of Y-[EQ]-X-X-L-A-X stretch occupies residues 203–448 (EAKLAQYQAD…KRNADAKADY (246 aa)). A V-region (lectin-like) region spans residues 461 to 834 (KYQKDLADYP…VNVPKVTKEK (374 aa)). 2 disordered regions span residues 827–985 (VPKV…PTPP) and 1486–1511 (NTVK…PRTS). Residues 848 to 887 (TYETEKPLKPAPVAPNYEKEPTPPTRTPDQAEPNKPTPPT) form a P1 repeat. A P2 repeat occupies 888–926 (YETEKPLEPAPVEPSYEAEPTPPTRTPDQAEPNKPTPPT). The P3 repeat unit spans residues 927–964 (YETEKPLEPAPVEPSYEAEPTPPTPTPDQPEPNKPVEP). Pro residues predominate over residues 946–961 (PTPPTPTPDQPEPNKP). Positions 1532–1536 (LPNTG) match the LPXTG sorting signal motif. Thr-1535 carries the post-translational modification Pentaglycyl murein peptidoglycan amidated threonine. Positions 1536 to 1565 (GVTNNAYMPLLGIIGLVTSFSLLGLKAKKD) are cleaved as a propeptide — removed by sortase.

The protein belongs to the antigen I/II family.

It is found in the secreted. It localises to the cell wall. Its function is as follows. Surface protein antigen implicated in dental caries. The polypeptide is Major cell-surface adhesin PAc (Streptococcus mutans).